Reading from the N-terminus, the 421-residue chain is MGGVKDKFLVKGGARLQGSVRVDGAKNSVLKLMAAALLAEGTTTLTNCPEILDVPLMRDVLVGLGCEVEIDGHTVTIHTPAELKSDADFPAVTQFRASVCVLGPLTARCGRAVVSLPGGDAIGSRPLDMHQSGLEQLGATTRTQHGAVVAEADKLVGAEISLDFPSVGATENILMASVMAEGQTTLDNAAREPEIVDLCRMLRSMGADIEGEGSPKITINGVEKLHPTSHEVIGDRIVAGTWAFAAAMTRGDVTVGGIAPRYLHLPLEKLKLAGAQVDTFENGFRVVMNKRPKSTDYQTLPFPGFPTDLQPMAIGLNAIADGVAVVTENVFESRFRFVDEMQRLGADTSVDGHHVVIRGIEELSSTTVWSSDIRAGAGLVIAALCAEGTTEVRDVFHIDRGYPNFVENLQALGADIQRVVA.

Lys-26–Asn-27 is a phosphoenolpyruvate binding site. Arg-96 provides a ligand contact to UDP-N-acetyl-alpha-D-glucosamine. The Proton donor role is filled by Asp-120. Residues Asp-308 and Val-330 each coordinate UDP-N-acetyl-alpha-D-glucosamine.

The protein belongs to the EPSP synthase family. MurA subfamily.

It is found in the cytoplasm. It catalyses the reaction phosphoenolpyruvate + UDP-N-acetyl-alpha-D-glucosamine = UDP-N-acetyl-3-O-(1-carboxyvinyl)-alpha-D-glucosamine + phosphate. It functions in the pathway cell wall biogenesis; peptidoglycan biosynthesis. In terms of biological role, cell wall formation. Adds enolpyruvyl to UDP-N-acetylglucosamine. This Corynebacterium efficiens (strain DSM 44549 / YS-314 / AJ 12310 / JCM 11189 / NBRC 100395) protein is UDP-N-acetylglucosamine 1-carboxyvinyltransferase.